We begin with the raw amino-acid sequence, 90 residues long: Bombyxin B-12 (90 aa).

Positions 1–20 are cleaved as a signal peptide; the sequence is MMKTTIMFMLVVVISLTYSS. Cystine bridges form between C30–C76, C42–C89, and C75–C80. Positions 49–67 are cleaved as a propeptide — c peptide like; sequence SGAQYAPYFWTRQYLGSRG.

The protein belongs to the insulin family. In terms of assembly, heterodimer of a B chain and an A chain linked by two disulfide bonds.

It localises to the secreted. In terms of biological role, brain peptide responsible for activation of prothoracic glands to produce ecdysone in insects. The sequence is that of Bombyxin B-12 (BBXB12) from Bombyx mori (Silk moth).